Consider the following 349-residue polypeptide: Phenylalanine--tRNA ligase alpha subunit (349 aa).

Position 264 (Glu264) interacts with Mg(2+).

This sequence belongs to the class-II aminoacyl-tRNA synthetase family. Phe-tRNA synthetase alpha subunit type 1 subfamily. Tetramer of two alpha and two beta subunits. Mg(2+) serves as cofactor.

The protein resides in the cytoplasm. The catalysed reaction is tRNA(Phe) + L-phenylalanine + ATP = L-phenylalanyl-tRNA(Phe) + AMP + diphosphate + H(+). The chain is Phenylalanine--tRNA ligase alpha subunit from Myxococcus xanthus (strain DK1622).